The primary structure comprises 223 residues: MKRTKSIRHASFRKNWSARHLTPVALAVATVFMLASCEKSDETVSLYQNADDCSAANPGKSAECTTAYNNALKEAERTAPKYATREDCVAEFGEGQCQQAPAQAGMAPENQAQAQQSSGSFWMPLMAGYMMGRLMGGGAGFAQQPLFSSKNPASPAYGKYTDATGKNYGAAQPGRTMTVPKTAMAPKPATTTTVTRGGFGESIAKQSTMQRSATGTSSRSMGG.

Residues 178–195 are compositionally biased toward low complexity; it reads TVPKTAMAPKPATTTTVT. Residues 178-223 form a disordered region; that stretch reads TVPKTAMAPKPATTTTVTRGGFGESIAKQSTMQRSATGTSSRSMGG. The span at 204–223 shows a compositional bias: polar residues; the sequence is AKQSTMQRSATGTSSRSMGG.

The protein belongs to the UPF0441 family.

The protein is UPF0441 protein YgiB of Shigella boydii serotype 4 (strain Sb227).